The sequence spans 376 residues: Transcription initiation factor IIA subunit 1 (376 aa).

A2 is subject to N-acetylalanine. Low complexity-rich tracts occupy residues 69-79 (QVQQQHQPQQQ) and 89-105 (QAQP…TQQV). Disordered regions lie at residues 69–107 (QVQQ…QVLI), 246–265 (AQAQ…PAQT), and 274–329 (DGTG…QELF). Phosphoserine; by TAF1 is present on residues S280, S281, S316, and S321. The segment covering 280 to 329 (SSEEDEDEEEDYDDDEEEDKEKDGAEDGQVEEEPLNSEDDVSDEEGQELF) has biased composition (acidic residues). DNA is bound by residues H343 and R344.

This sequence belongs to the TFIIA subunit 1 family. TFIIA is a heterodimer of the large unprocessed subunit 1 and a small subunit gamma. It was originally believed to be a heterotrimer of an alpha (p35), a beta (p19) and a gamma subunit (p12). TFIIA forms a complex with TBP. Part of TBP-based Pol II pre-initiation complex (PIC), in which Pol II core assembles with general transcription factors and other specific initiation factors including GTF2E1, GTF2E2, GTF2F1, GTF2F2, TCEA1, ERCC2, ERCC3, GTF2H2, GTF2H3, GTF2H4, GTF2H5, GTF2A1, GTF2A2, GTF2B and TBP; this large multi-subunit PIC complex mediates DNA unwinding and targets Pol II core to the transcription start site where the first phosphodiester bond forms. In terms of processing, the alpha and beta subunits are postranslationally produced from the precursor formby TASP1. The cleavage promotes proteasomal degradation.

It is found in the nucleus. Functionally, TFIIA is a component of the transcription machinery of RNA polymerase II and plays an important role in transcriptional activation. TFIIA in a complex with TBP mediates transcriptional activity. The protein is Transcription initiation factor IIA subunit 1 (GTF2A1) of Pongo abelii (Sumatran orangutan).